We begin with the raw amino-acid sequence, 905 residues long: Translation initiation factor IF-2 (905 aa).

Disordered stretches follow at residues 52 to 84 (QSHG…SKSV), 116 to 230 (AKKR…QKKT), and 269 to 318 (FEKE…FEKP). Over residues 65–84 (KSKTTSTARVTGSSGKSKSV) the composition is skewed to polar residues. Over residues 116-138 (AKKRAEEEAKKREQVKKEAEERQ) the composition is skewed to basic and acidic residues. Residues 165–178 (VVVKKGSKAAAAAK) show a composition bias toward low complexity. Composition is skewed to basic and acidic residues over residues 190 to 230 (PKVE…QKKT) and 269 to 278 (FEKERREIKR). The tr-type G domain occupies 406-575 (TRPPVVTIMG…NLQAELMELE (170 aa)). The segment at 415 to 422 (GHVDHGKT) is G1. 415–422 (GHVDHGKT) serves as a coordination point for GTP. Residues 440 to 444 (GITQH) form a G2 region. A G3 region spans residues 461-464 (DTPG). GTP is bound by residues 461 to 465 (DTPGH) and 515 to 518 (NKMD). Residues 515–518 (NKMD) are G4. The segment at 551-553 (SAK) is G5.

It belongs to the TRAFAC class translation factor GTPase superfamily. Classic translation factor GTPase family. IF-2 subfamily.

Its subcellular location is the cytoplasm. Its function is as follows. One of the essential components for the initiation of protein synthesis. Protects formylmethionyl-tRNA from spontaneous hydrolysis and promotes its binding to the 30S ribosomal subunits. Also involved in the hydrolysis of GTP during the formation of the 70S ribosomal complex. This Psychrobacter sp. (strain PRwf-1) protein is Translation initiation factor IF-2.